The primary structure comprises 273 residues: NLP effector protein 10 (273 aa).

A signal peptide spans 1–21; it reads MKLPTFLIGFVALLVTSNGSA. The N-linked (GlcNAc...) asparagine glycan is linked to Asn-91. The Conserved undecapeptide motif signature appears at 129 to 139; the sequence is AIMYAWYLPRA. The Conserved heptapeptide motif signature appears at 149 to 155; it reads GHRHYWL.

This sequence belongs to the Necrosis inducing protein (NPP1) family.

Its subcellular location is the secreted. In terms of biological role, secreted effector that acts as a pathogen-associated molecular pattern (PAMP) recognized by the plant immune system. Seems not to induce necrosis in Nicotiana benthamiana leaves but significantly improves disease resistance of Arabidopsis thaliana to Hyaloperonospora arabidopsidis and causes an inhibition of plant growth which is typically associated with enhanced immunity when over-expressed in Arabidopsis. This is NLP effector protein 10 from Plasmopara viticola (Downy mildew of grapevine).